The following is a 256-amino-acid chain: Ubiquinone/menaquinone biosynthesis C-methyltransferase UbiE (256 aa).

S-adenosyl-L-methionine contacts are provided by residues T79, D100, and 128 to 129 (DA).

Belongs to the class I-like SAM-binding methyltransferase superfamily. MenG/UbiE family.

It carries out the reaction a 2-demethylmenaquinol + S-adenosyl-L-methionine = a menaquinol + S-adenosyl-L-homocysteine + H(+). The enzyme catalyses a 2-methoxy-6-(all-trans-polyprenyl)benzene-1,4-diol + S-adenosyl-L-methionine = a 5-methoxy-2-methyl-3-(all-trans-polyprenyl)benzene-1,4-diol + S-adenosyl-L-homocysteine + H(+). The protein operates within quinol/quinone metabolism; menaquinone biosynthesis; menaquinol from 1,4-dihydroxy-2-naphthoate: step 2/2. It participates in cofactor biosynthesis; ubiquinone biosynthesis. Functionally, methyltransferase required for the conversion of demethylmenaquinol (DMKH2) to menaquinol (MKH2) and the conversion of 2-polyprenyl-6-methoxy-1,4-benzoquinol (DDMQH2) to 2-polyprenyl-3-methyl-6-methoxy-1,4-benzoquinol (DMQH2). The protein is Ubiquinone/menaquinone biosynthesis C-methyltransferase UbiE of Pseudomonas aeruginosa (strain LESB58).